Here is a 271-residue protein sequence, read N- to C-terminus: Tritrans,polycis-undecaprenyl-diphosphate synthase (geranylgeranyl-diphosphate specific) (271 aa).

Aspartate 50 is a catalytic residue. Residue aspartate 50 coordinates Mg(2+). Substrate contacts are provided by residues 51 to 54 (GNRR), phenylalanine 55, histidine 67, and 95 to 97 (STE). Asparagine 98 serves as the catalytic Proton acceptor. Residues arginine 101, arginine 220, and 226 to 228 (RLS) contribute to the substrate site. Mg(2+) is bound at residue glutamate 239.

This sequence belongs to the UPP synthase family. In terms of assembly, homodimer. Mg(2+) serves as cofactor.

The catalysed reaction is geranylgeranyl diphosphate + 7 isopentenyl diphosphate = tri-trans,hepta-cis-undecaprenyl diphosphate + 7 diphosphate. Its function is as follows. Catalyzes the sequential condensation of isopentenyl diphosphate (IPP) with geranylgeranyl diphosphate (GGPP) to yield (2Z,6Z,10Z,14Z,18Z,22Z,26Z,30E,34E,38E)-undecaprenyl diphosphate (tritrans,heptacis-UPP). It is probably the precursor of glycosyl carrier lipids. The protein is Tritrans,polycis-undecaprenyl-diphosphate synthase (geranylgeranyl-diphosphate specific) of Methanopyrus kandleri (strain AV19 / DSM 6324 / JCM 9639 / NBRC 100938).